A 78-amino-acid chain; its full sequence is RNA-binding protein Hfq (78 aa).

Positions Asp-10–Val-69 constitute a Sm domain.

Belongs to the Hfq family. In terms of assembly, homohexamer.

RNA chaperone that binds small regulatory RNA (sRNAs) and mRNAs to facilitate mRNA translational regulation in response to envelope stress, environmental stress and changes in metabolite concentrations. Also binds with high specificity to tRNAs. The protein is RNA-binding protein Hfq of Paraburkholderia phymatum (strain DSM 17167 / CIP 108236 / LMG 21445 / STM815) (Burkholderia phymatum).